Here is a 376-residue protein sequence, read N- to C-terminus: Succinyl-diaminopimelate desuccinylase (376 aa).

Histidine 67 lines the Zn(2+) pocket. The active site involves aspartate 69. Position 100 (aspartate 100) interacts with Zn(2+). Residue glutamate 134 is the Proton acceptor of the active site. Residues glutamate 135, glutamate 163, and histidine 349 each coordinate Zn(2+).

It belongs to the peptidase M20A family. DapE subfamily. Homodimer. Requires Zn(2+) as cofactor. Co(2+) serves as cofactor.

The enzyme catalyses N-succinyl-(2S,6S)-2,6-diaminopimelate + H2O = (2S,6S)-2,6-diaminopimelate + succinate. The protein operates within amino-acid biosynthesis; L-lysine biosynthesis via DAP pathway; LL-2,6-diaminopimelate from (S)-tetrahydrodipicolinate (succinylase route): step 3/3. In terms of biological role, catalyzes the hydrolysis of N-succinyl-L,L-diaminopimelic acid (SDAP), forming succinate and LL-2,6-diaminopimelate (DAP), an intermediate involved in the bacterial biosynthesis of lysine and meso-diaminopimelic acid, an essential component of bacterial cell walls. This Xanthomonas campestris pv. campestris (strain 8004) protein is Succinyl-diaminopimelate desuccinylase.